Here is a 421-residue protein sequence, read N- to C-terminus: Large ribosomal subunit protein uL4 (421 aa).

A2 is subject to N-acetylalanine. N6-acetyllysine is present on K14. R97 carries the post-translational modification Omega-N-methylarginine. K106 carries the post-translational modification N6-acetyllysine. A Glycyl lysine isopeptide (Lys-Gly) (interchain with G-Cter in SUMO2) cross-link involves residue K239. Residue K259 is modified to N6-acetyllysine. T266 carries the post-translational modification Phosphothreonine. Phosphoserine is present on residues S290 and S295. R300 carries the post-translational modification Citrulline. K327 is covalently cross-linked (Glycyl lysine isopeptide (Lys-Gly) (interchain with G-Cter in SUMO2)). Residues K333 and K353 each carry the N6-acetyllysine modification. N6-acetyllysine; alternate is present on K364. Residue K364 forms a Glycyl lysine isopeptide (Lys-Gly) (interchain with G-Cter in SUMO1); alternate linkage. At S365 the chain carries Phosphoserine. Residues 365–379 (SEKIVPEKGAGDKKP) are compositionally biased toward basic and acidic residues. The segment at 365-421 (SEKIVPEKGAGDKKPAVGKKGKKPVDAKKLKKPAGKKVVTKKPAEKKPTTEEKKSAA) is disordered. Over residues 393–404 (KLKKPAGKKVVT) the composition is skewed to basic residues. Residues 406–421 (KPAEKKPTTEEKKSAA) show a composition bias toward basic and acidic residues.

It belongs to the universal ribosomal protein uL4 family. As to quaternary structure, component of the large ribosomal subunit. May bind IPO9 with low affinity. Interacts with RBM3. Citrullinated by PADI4.

The protein resides in the cytoplasm. In terms of biological role, component of the large ribosomal subunit. The ribosome is a large ribonucleoprotein complex responsible for the synthesis of proteins in the cell. This chain is Large ribosomal subunit protein uL4 (Rpl4), found in Rattus norvegicus (Rat).